Consider the following 79-residue polypeptide: Large ribosomal subunit protein bL31 (79 aa).

Belongs to the bacterial ribosomal protein bL31 family. Type A subfamily. As to quaternary structure, part of the 50S ribosomal subunit.

Functionally, binds the 23S rRNA. The chain is Large ribosomal subunit protein bL31 (rpmE) from Rickettsia bellii (strain RML369-C).